Consider the following 114-residue polypeptide: Fructose-bisphosphate aldolase 2 (114 aa).

35–38 (NIDT) provides a ligand contact to dihydroxyacetone phosphate.

This sequence belongs to the class II fructose-bisphosphate aldolase family. As to quaternary structure, homodimer. Requires Zn(2+) as cofactor.

It catalyses the reaction beta-D-fructose 1,6-bisphosphate = D-glyceraldehyde 3-phosphate + dihydroxyacetone phosphate. The protein operates within carbohydrate biosynthesis; Calvin cycle. It functions in the pathway carbohydrate degradation; glycolysis; D-glyceraldehyde 3-phosphate and glycerone phosphate from D-glucose: step 4/4. Functionally, catalyzes the aldol condensation of dihydroxyacetone phosphate (DHAP or glycerone-phosphate) with glyceraldehyde 3-phosphate (G3P) to form fructose 1,6-bisphosphate (FBP) in gluconeogenesis and the reverse reaction in glycolysis. This is Fructose-bisphosphate aldolase 2 (cbbA) from Rhodobacter capsulatus (Rhodopseudomonas capsulata).